The sequence spans 278 residues: Embryonic polyadenylate-binding protein 2 (278 aa).

Disordered stretches follow at residues 21 to 66 (VSSD…GDAG) and 101 to 128 (EGTP…LSPE). A compositionally biased stretch (basic and acidic residues) spans 35–50 (ETKEILGPEGGEGKEE). A compositionally biased stretch (acidic residues) spans 51 to 63 (KEEEEDAEEDQDG). The RRM domain maps to 147 to 224 (RSVYVGNVDY…RVIKVLPKRT (78 aa)). A disordered region spans residues 227 to 278 (PGISSTDRGGLRGHPGSRGAPFPHSGLQGRPRLRPQGQNRARGKFSPWFSPY).

Expressed in various adult tissues.

The protein localises to the cytoplasm. In terms of biological role, binds the poly(A) tail of mRNA. The chain is Embryonic polyadenylate-binding protein 2 (PABPN1L) from Homo sapiens (Human).